Reading from the N-terminus, the 226-residue chain is Ribonuclease 3 (226 aa).

The 123-residue stretch at 6 to 128 (IQKLQKILGY…LIGSIFLDSN (123 aa)) folds into the RNase III domain. A Mg(2+)-binding site is contributed by glutamate 41. Residue aspartate 45 is part of the active site. Mg(2+)-binding residues include asparagine 114 and glutamate 117. Residue glutamate 117 is part of the active site. The DRBM domain occupies 155–225 (DPKTRLQEYL…AQNALIKLGI (71 aa)).

It belongs to the ribonuclease III family. In terms of assembly, homodimer. Mg(2+) is required as a cofactor.

It localises to the cytoplasm. The enzyme catalyses Endonucleolytic cleavage to 5'-phosphomonoester.. Functionally, digests double-stranded RNA. Involved in the processing of primary rRNA transcript to yield the immediate precursors to the large and small rRNAs (23S and 16S). Processes some mRNAs, and tRNAs when they are encoded in the rRNA operon. Processes pre-crRNA and tracrRNA of type II CRISPR loci if present in the organism. This Buchnera aphidicola subsp. Baizongia pistaciae (strain Bp) protein is Ribonuclease 3.